Reading from the N-terminus, the 373-residue chain is DNA replication and repair protein RecF (373 aa).

30 to 37 (GANGSGKT) provides a ligand contact to ATP.

Belongs to the RecF family.

Its subcellular location is the cytoplasm. In terms of biological role, the RecF protein is involved in DNA metabolism; it is required for DNA replication and normal SOS inducibility. RecF binds preferentially to single-stranded, linear DNA. It also seems to bind ATP. The polypeptide is DNA replication and repair protein RecF (Marinobacter nauticus (strain ATCC 700491 / DSM 11845 / VT8) (Marinobacter aquaeolei)).